The primary structure comprises 194 residues: Imidazoleglycerol-phosphate dehydratase (194 aa).

Belongs to the imidazoleglycerol-phosphate dehydratase family.

The protein resides in the cytoplasm. It carries out the reaction D-erythro-1-(imidazol-4-yl)glycerol 3-phosphate = 3-(imidazol-4-yl)-2-oxopropyl phosphate + H2O. It functions in the pathway amino-acid biosynthesis; L-histidine biosynthesis; L-histidine from 5-phospho-alpha-D-ribose 1-diphosphate: step 6/9. This is Imidazoleglycerol-phosphate dehydratase from Listeria monocytogenes serotype 4b (strain F2365).